The chain runs to 936 residues: MutS protein homolog 4 (936 aa).

Disordered stretches follow at residues 1–83 (MLRP…AQGS) and 103–133 (GASSSSARDTNYPQTLKTPLSTGNPQRSGYK). Low complexity predominate over residues 7–20 (SSTSPSAPAVSPSS). The segment covering 35–55 (LQETPQSRPSVQVVSASTCPG) has biased composition (polar residues). 680 to 687 (GPNMSGKS) lines the ATP pocket.

The protein belongs to the DNA mismatch repair MutS family. Heterooligomer of MSH4 and MSH5. In terms of tissue distribution, highly expressed in testis. Also expressed in the ovary.

It is found in the chromosome. Its function is as follows. Involved in meiotic recombination. Required for reciprocal recombination and proper segregation of homologous chromosomes at meiosis. In Homo sapiens (Human), this protein is MutS protein homolog 4 (MSH4).